Reading from the N-terminus, the 725-residue chain is Methionine--tRNA ligase (725 aa).

Positions 27–37 (PYANGQIHIGH) match the 'HIGH' region motif. Residues cysteine 158, cysteine 161, cysteine 171, and cysteine 174 each coordinate Zn(2+). The 'KMSKS' region signature appears at 348–352 (KMSKS). Lysine 351 contributes to the ATP binding site. The 107-residue stretch at 619-725 (DFAKIDLRIA…SGAKPGMRVK (107 aa)) folds into the tRNA-binding domain.

The protein belongs to the class-I aminoacyl-tRNA synthetase family. MetG type 1 subfamily. In terms of assembly, homodimer. The cofactor is Zn(2+).

Its subcellular location is the cytoplasm. It catalyses the reaction tRNA(Met) + L-methionine + ATP = L-methionyl-tRNA(Met) + AMP + diphosphate. Is required not only for elongation of protein synthesis but also for the initiation of all mRNA translation through initiator tRNA(fMet) aminoacylation. This is Methionine--tRNA ligase from Burkholderia pseudomallei (strain 1106a).